Here is a 238-residue protein sequence, read N- to C-terminus: dITP/XTP pyrophosphatase (238 aa).

Residue 7–12 (SANQHK) coordinates substrate. Asp89 functions as the Proton acceptor in the catalytic mechanism. Asp89 provides a ligand contact to Mg(2+). Substrate contacts are provided by residues Ser90, 191–194 (FGYD), Lys217, and 222–223 (HR).

Belongs to the HAM1 NTPase family. Homodimer. Mg(2+) is required as a cofactor.

The enzyme catalyses XTP + H2O = XMP + diphosphate + H(+). The catalysed reaction is dITP + H2O = dIMP + diphosphate + H(+). It carries out the reaction ITP + H2O = IMP + diphosphate + H(+). Pyrophosphatase that catalyzes the hydrolysis of nucleoside triphosphates to their monophosphate derivatives, with a high preference for the non-canonical purine nucleotides XTP (xanthosine triphosphate), dITP (deoxyinosine triphosphate) and ITP. Seems to function as a house-cleaning enzyme that removes non-canonical purine nucleotides from the nucleotide pool, thus preventing their incorporation into DNA/RNA and avoiding chromosomal lesions. In Helicobacter hepaticus (strain ATCC 51449 / 3B1), this protein is dITP/XTP pyrophosphatase.